Here is a 202-residue protein sequence, read N- to C-terminus: Superoxide dismutase [Fe] (202 aa).

His-30, His-78, Asp-164, and His-168 together coordinate Fe cation.

This sequence belongs to the iron/manganese superoxide dismutase family. As to quaternary structure, homotetramer. It depends on Fe cation as a cofactor.

The catalysed reaction is 2 superoxide + 2 H(+) = H2O2 + O2. Destroys superoxide anion radicals which are normally produced within the cells and which are toxic to biological systems. The protein is Superoxide dismutase [Fe] (sod) of Methanothermobacter marburgensis (strain ATCC BAA-927 / DSM 2133 / JCM 14651 / NBRC 100331 / OCM 82 / Marburg) (Methanobacterium thermoautotrophicum).